The chain runs to 258 residues: Indole-3-glycerol phosphate synthase (258 aa).

The protein belongs to the TrpC family.

It catalyses the reaction 1-(2-carboxyphenylamino)-1-deoxy-D-ribulose 5-phosphate + H(+) = (1S,2R)-1-C-(indol-3-yl)glycerol 3-phosphate + CO2 + H2O. Its pathway is amino-acid biosynthesis; L-tryptophan biosynthesis; L-tryptophan from chorismate: step 4/5. The sequence is that of Indole-3-glycerol phosphate synthase from Endomicrobium trichonymphae.